Reading from the N-terminus, the 302-residue chain is MLRGTFVALITPFAGEEIDEPRLRDLVDWLIANRVDGLVPCGTTGETPSLSDTEWQRVAAVVIEQAAGRVPVIVGTGTNSTMVTIQRTRVARELGATAAMVVTPYYNKPQQDGLYRHVAAIADAVDLPLVIYNVPSRTGVNLAPETARRLLDIAPVIAFKDSSGSLDQVSELVLAVGDRSSVLSGDDSLTLPIIAVGGQGVVSVLANIAPAATATMVRAALDGDLARARQLHGELFPLARALFIETNPVPVKTAAELLGLCSATVRLPLAPLAPANRERLLAALASCPHTASLLARPMGEAA.

Thr44 is a pyruvate binding site. Tyr132 serves as the catalytic Proton donor/acceptor. Lys160 (schiff-base intermediate with substrate) is an active-site residue. Val202 is a pyruvate binding site.

The protein belongs to the DapA family. As to quaternary structure, homotetramer; dimer of dimers.

It is found in the cytoplasm. It catalyses the reaction L-aspartate 4-semialdehyde + pyruvate = (2S,4S)-4-hydroxy-2,3,4,5-tetrahydrodipicolinate + H2O + H(+). Its pathway is amino-acid biosynthesis; L-lysine biosynthesis via DAP pathway; (S)-tetrahydrodipicolinate from L-aspartate: step 3/4. In terms of biological role, catalyzes the condensation of (S)-aspartate-beta-semialdehyde [(S)-ASA] and pyruvate to 4-hydroxy-tetrahydrodipicolinate (HTPA). In Thermomicrobium roseum (strain ATCC 27502 / DSM 5159 / P-2), this protein is 4-hydroxy-tetrahydrodipicolinate synthase.